The chain runs to 280 residues: MQEVISYIQKAVLEISNALKFPDTSYSQNQNFTGDTQLKFDVLSDEIITKTLSQCSSIKAIISEEKDEILTLNERANFIVAYDPLDGSSLMDVNFAIGSIFAIYEEKASAKNLRAALYSMYGARLELVICKDQPKLYRLNANNEFIFIKDLRMNEKGKINATGGTQKFWEEKHAKFIKSLFDEGYRLRYSGAMVSDINQILLKGGGIFSYPATQDAPNGKLRAFFEVFPLAFIIEKAGGKTTNGKNRSLLELEFDKIHATTPCFFGSEYEISKLLKAYNE.

Positions 64, 83, 85, and 86 each coordinate Mg(2+). Substrate is bound by residues 86–89 (DGSS), tyrosine 189, and lysine 220. A Mg(2+)-binding site is contributed by glutamate 226.

Belongs to the FBPase class 1 family. In terms of assembly, homotetramer. It depends on Mg(2+) as a cofactor.

Its subcellular location is the cytoplasm. It carries out the reaction beta-D-fructose 1,6-bisphosphate + H2O = beta-D-fructose 6-phosphate + phosphate. The protein operates within carbohydrate biosynthesis; gluconeogenesis. This Campylobacter jejuni subsp. jejuni serotype O:2 (strain ATCC 700819 / NCTC 11168) protein is Fructose-1,6-bisphosphatase class 1.